A 401-amino-acid chain; its full sequence is Phosphoglycerate kinase (401 aa).

Substrate is bound by residues 20-22 (DFN), Arg-35, 58-61 (HLGR), Arg-117, and Arg-154. ATP is bound by residues Lys-204, Gly-298, Glu-329, and 358-361 (GGDS).

It belongs to the phosphoglycerate kinase family. As to quaternary structure, monomer.

Its subcellular location is the cytoplasm. It catalyses the reaction (2R)-3-phosphoglycerate + ATP = (2R)-3-phospho-glyceroyl phosphate + ADP. It functions in the pathway carbohydrate degradation; glycolysis; pyruvate from D-glyceraldehyde 3-phosphate: step 2/5. The polypeptide is Phosphoglycerate kinase (Bifidobacterium longum (strain NCC 2705)).